The primary structure comprises 87 residues: MKEGIHPDYREVLFIDMSNDFKFVTRSTIQTRETAEFNGKTYPLAKIEVSSESHPFYTGQQKIMDTAGRVEKFNKKFGARASGKAAK.

This sequence belongs to the bacterial ribosomal protein bL31 family. Type B subfamily. Part of the 50S ribosomal subunit.

The polypeptide is Large ribosomal subunit protein bL31B (Paraburkholderia phymatum (strain DSM 17167 / CIP 108236 / LMG 21445 / STM815) (Burkholderia phymatum)).